Consider the following 386-residue polypeptide: 1-deoxy-D-xylulose 5-phosphate reductoisomerase (386 aa).

Residues Thr-10, Gly-11, Ser-12, Ile-13, Gly-36, Asn-38, and Asn-122 each coordinate NADPH. Lys-123 is a 1-deoxy-D-xylulose 5-phosphate binding site. Residue Glu-124 participates in NADPH binding. Residue Asp-148 participates in Mn(2+) binding. 1-deoxy-D-xylulose 5-phosphate contacts are provided by Ser-149, Glu-150, Ser-174, and His-197. Glu-150 contributes to the Mn(2+) binding site. An NADPH-binding site is contributed by Gly-203. Residues Ser-210, Asn-215, Lys-216, and Glu-219 each contribute to the 1-deoxy-D-xylulose 5-phosphate site. Residue Glu-219 participates in Mn(2+) binding.

Belongs to the DXR family. Mg(2+) serves as cofactor. The cofactor is Mn(2+).

It carries out the reaction 2-C-methyl-D-erythritol 4-phosphate + NADP(+) = 1-deoxy-D-xylulose 5-phosphate + NADPH + H(+). It functions in the pathway isoprenoid biosynthesis; isopentenyl diphosphate biosynthesis via DXP pathway; isopentenyl diphosphate from 1-deoxy-D-xylulose 5-phosphate: step 1/6. Catalyzes the NADPH-dependent rearrangement and reduction of 1-deoxy-D-xylulose-5-phosphate (DXP) to 2-C-methyl-D-erythritol 4-phosphate (MEP). This Geotalea uraniireducens (strain Rf4) (Geobacter uraniireducens) protein is 1-deoxy-D-xylulose 5-phosphate reductoisomerase.